Here is a 263-residue protein sequence, read N- to C-terminus: Shikimate dehydrogenase (NADP(+)) (263 aa).

Residues 16-18 (SKS) and Thr-65 each bind shikimate. The active-site Proton acceptor is the Lys-69. Shikimate contacts are provided by Asn-90 and Asp-105. Residues 125 to 129 (GSGGS) and Leu-208 each bind NADP(+). Residue Tyr-210 coordinates shikimate. Gly-230 provides a ligand contact to NADP(+).

Belongs to the shikimate dehydrogenase family. As to quaternary structure, homodimer.

The catalysed reaction is shikimate + NADP(+) = 3-dehydroshikimate + NADPH + H(+). Its pathway is metabolic intermediate biosynthesis; chorismate biosynthesis; chorismate from D-erythrose 4-phosphate and phosphoenolpyruvate: step 4/7. Involved in the biosynthesis of the chorismate, which leads to the biosynthesis of aromatic amino acids. Catalyzes the reversible NADPH linked reduction of 3-dehydroshikimate (DHSA) to yield shikimate (SA). In Helicobacter acinonychis (strain Sheeba), this protein is Shikimate dehydrogenase (NADP(+)).